Here is a 228-residue protein sequence, read N- to C-terminus: Protein ULTRAPETALA 2 (228 aa).

The 108-residue stretch at 14–121 (EELQEISGVH…NKALKNSNVS (108 aa)) folds into the SAND domain.

Expressed in influorescence, pollen and siliques, with a higher expression in influorescence.

The protein resides in the cytoplasm. It localises to the nucleus. Functionally, putative transcription factor that acts as a key negative regulator of cell accumulation in shoot and floral meristems. Negatively regulates the size of the WUSCHEL (WUS)-expressing organizing center in inflorescence meristems. May act by down-regulating expression of WUS. Can compensate for mutant ULT1 protein when overexpressed. This chain is Protein ULTRAPETALA 2 (ULT2), found in Arabidopsis thaliana (Mouse-ear cress).